A 612-amino-acid chain; its full sequence is Probable serine/threonine-protein kinase WNK4 (612 aa).

The Protein kinase domain occupies 25–282 (IRYNEVLGRG…AKELLQDPFL (258 aa)). Residues 105–108 (TELF) and Lys-155 contribute to the ATP site. The Proton acceptor role is filled by Asp-172.

It belongs to the protein kinase superfamily. Ser/Thr protein kinase family. WNK subfamily.

It catalyses the reaction L-seryl-[protein] + ATP = O-phospho-L-seryl-[protein] + ADP + H(+). The enzyme catalyses L-threonyl-[protein] + ATP = O-phospho-L-threonyl-[protein] + ADP + H(+). In Oryza sativa subsp. japonica (Rice), this protein is Probable serine/threonine-protein kinase WNK4 (WNK4).